The primary structure comprises 742 residues: Probable serine/threonine-protein kinase PkwA (742 aa).

A Protein kinase domain is found at 16-266 (YRLVSRLGAG…TAELLAQLST (251 aa)). Residues 22 to 30 (LGAGGMGQV) and K44 contribute to the ATP site. The Proton acceptor role is filled by D138. The segment at 266–394 (TDHTGDDWPP…PWSPPRVQPP (129 aa)) is disordered. The span at 301–318 (EPPPPSHGPPRPSEPLPD) shows a compositional bias: pro residues. Residues 343-356 (LEEKPIQVIHEPER) show a composition bias toward basic and acidic residues. Pro residues predominate over residues 377–392 (PRPAAPQPPWSPPRVQ). WD repeat units follow at residues 455–496 (ILTT…ELHT), 497–538 (LEGH…ERAV), 539–580 (FEGH…EHAV), 581–621 (LKGH…KERD), 622–663 (VLQA…ALHT), 664–705 (FEGH…EHTT), and 706–742 (LEGH…IATE).

Belongs to the protein kinase superfamily. Ser/Thr protein kinase family.

It catalyses the reaction L-seryl-[protein] + ATP = O-phospho-L-seryl-[protein] + ADP + H(+). It carries out the reaction L-threonyl-[protein] + ATP = O-phospho-L-threonyl-[protein] + ADP + H(+). Its function is as follows. May play a regulatory role during the complex growth cycle and in secondary metabolite production. The polypeptide is Probable serine/threonine-protein kinase PkwA (pkwA) (Thermomonospora curvata).